The sequence spans 407 residues: Putative metabolite transport protein HI_1104 (407 aa).

Over 1-16 the chain is Cytoplasmic; it reads MTNKVNSYGWKALIGS. A helical transmembrane segment spans residues 17 to 37; it reads AVGYGMDGFDLLILGFMLSAI. The Periplasmic portion of the chain corresponds to 38–48; sequence SADLNLTPAQG. Residues 49–69 traverse the membrane as a helical segment; it reads GSLVTWTLIGAVFGGILFGAL. Topologically, residues 70–77 are cytoplasmic; that stretch reads SDKYGRVR. The helical transmembrane segment at 78-98 threads the bilayer; the sequence is VLTWTILLFAVFTGLCAIAQG. Topologically, residues 99-107 are periplasmic; sequence YWDLLIYRT. A helical membrane pass occupies residues 108 to 128; the sequence is IAGIGLGGEFGIGMALAAEAW. Over 129–138 the chain is Cytoplasmic; the sequence is PARHRAKAAS. A helical transmembrane segment spans residues 139–159; it reads YVALGWQVGVLGAALLTPLLL. Pro-160 is a topological domain (periplasmic). The chain crosses the membrane as a helical span at residues 161 to 181; the sequence is HIGWRGMFLVGIFPAFVAWFL. The Cytoplasmic segment spans residues 182–224; that stretch reads RSHLHEPEIFTQKQTALSTQSSFTDKLRSFQLLIKDKATSKIS. Residues 225–245 traverse the membrane as a helical segment; that stretch reads LGIVVLTSVQNFGYYGIMIWL. Over 246-261 the chain is Periplasmic; that stretch reads PNFLSKQLGFSLTKSG. A helical transmembrane segment spans residues 262-282; it reads LWTAVTVCGMMAGIWIFGQLA. Over 283 to 288 the chain is Cytoplasmic; it reads DRIGRK. A helical membrane pass occupies residues 289–309; the sequence is PSFLLFQLGAVISIVVYSQLT. Residues 310–312 lie on the Periplasmic side of the membrane; sequence DPD. The chain crosses the membrane as a helical span at residues 313–333; sequence IMLLAGAFLGMFVNGMLGGYG. The Cytoplasmic segment spans residues 334–357; that stretch reads ALMAEAYPTEARATAQNVLFNIGR. The next 2 membrane-spanning stretches (helical) occupy residues 358-378 and 379-399; these read AVGG…SFQT and AIAL…FLIP. Residues 400 to 407 lie on the Cytoplasmic side of the membrane; sequence ELKGKALD.

The protein belongs to the major facilitator superfamily. Aromatic acid:H(+) symporter (AAHS) (TC 2.A.1.15) family.

The protein localises to the cell inner membrane. This chain is Putative metabolite transport protein HI_1104, found in Haemophilus influenzae (strain ATCC 51907 / DSM 11121 / KW20 / Rd).